Consider the following 314-residue polypeptide: Methionyl-tRNA formyltransferase (314 aa).

A (6S)-5,6,7,8-tetrahydrofolate-binding site is contributed by 111-114 (SLLP).

The protein belongs to the Fmt family.

The enzyme catalyses L-methionyl-tRNA(fMet) + (6R)-10-formyltetrahydrofolate = N-formyl-L-methionyl-tRNA(fMet) + (6S)-5,6,7,8-tetrahydrofolate + H(+). Attaches a formyl group to the free amino group of methionyl-tRNA(fMet). The formyl group appears to play a dual role in the initiator identity of N-formylmethionyl-tRNA by promoting its recognition by IF2 and preventing the misappropriation of this tRNA by the elongation apparatus. The sequence is that of Methionyl-tRNA formyltransferase from Nitrobacter winogradskyi (strain ATCC 25391 / DSM 10237 / CIP 104748 / NCIMB 11846 / Nb-255).